The sequence spans 248 residues: MRFDVVTLFPEMFSALTQWGITGRACEQFLASVHLWNPRDFCSDPRKTVDDRAYGGGPGMVMMVKPLEDTVAGIRASHEAAGIKSGPICLLAPQGERFSQKIATDILSYGNLSFICGRYEAVDQRFVDRNVDLQLSIGDFVLSGGEIPAMAMMDAVIRLIPGALGDGQSATQDSFMNGLLDYPHYTRPEIYENLSVPDVLLGGHHAKIVDWRRQKSLELTFRLRLDLIESARAKGLLTREDEQFLRSL.

S-adenosyl-L-methionine is bound by residues glycine 117 and 137-142 (IGDFVL).

The protein belongs to the RNA methyltransferase TrmD family. Homodimer.

The protein resides in the cytoplasm. The enzyme catalyses guanosine(37) in tRNA + S-adenosyl-L-methionine = N(1)-methylguanosine(37) in tRNA + S-adenosyl-L-homocysteine + H(+). Its function is as follows. Specifically methylates guanosine-37 in various tRNAs. The polypeptide is tRNA (guanine-N(1)-)-methyltransferase (Polynucleobacter necessarius subsp. necessarius (strain STIR1)).